Consider the following 535-residue polypeptide: Suppressor of cytokine signaling 6 (535 aa).

Basic residues predominate over residues 80–89 (RLSAKQKSKG). Positions 80–105 (RLSAKQKSKGKAGTPSGSSADEDTFS) are disordered. The 108-residue stretch at 384-491 (WYWGPITRWE…TYPVRLTNPV (108 aa)) folds into the SH2 domain. Residues 486–535 (RLTNPVSRFMQVRSLQYLCRFVIRQYTRIDLIQKLPLPNKMKDYLQEKHY) form the SOCS box domain.

In terms of assembly, interacts with RBCK1. Interacts with phosphorylated IRS4. Interacts with PIM3. Interacts with KIT (phosphorylated).

It participates in protein modification; protein ubiquitination. SOCS family proteins form part of a classical negative feedback system that regulates cytokine signal transduction. May be a substrate recognition component of a SCF-like ECS (Elongin BC-CUL2/5-SOCS-box protein) E3 ubiquitin-protein ligase complex which mediates the ubiquitination and subsequent proteasomal degradation of target proteins. Regulates KIT degradation by ubiquitination of the tyrosine-phosphorylated receptor. This chain is Suppressor of cytokine signaling 6 (SOCS6), found in Homo sapiens (Human).